Here is a 317-residue protein sequence, read N- to C-terminus: MSFDKELALALEIVQVSCKITTSVAEHTLTDQTQIKNDKSPVTVGDYSVQAYVNKKIHETFPEDQIVAEEDTKTIPEDIFAKVCKHVQIYSDMKDDEIRKSIDLGNSTGGKGRHWVLDPIDGTLGFLRREQYAVCLAFMIDGDIKVGVLGCPNFEGGLIVAAQKGCGAKMFSVNDIKNGKDIHVSTTPKTSDMCFCESVEVSHTDQSRSKTITERLQVTKPPVRMDSQCKYMAIASGRADVYLRLPRNLSYQEKIWDHAAGYLIVKEAGGKVTDIYGNDLDFSLGRTLCNNHGIVASNGILHEETVNVVKDVLSDLK.

The active-site Proton acceptor is the Asp46. Residues Glu69, Asp118, Ile120, and Asp121 each contribute to the Mg(2+) site. Thr123 acts as the Proton acceptor in catalysis. Residue Thr123 participates in adenosine 3',5'-bisphosphate binding. 7 residues coordinate AMP: Ser198, His203, Ser227, Lys230, Arg244, Tyr251, and Asp257. Residues His203, Ser227, Lys230, and Arg244 each coordinate adenosine 3',5'-bisphosphate. Mg(2+) is bound at residue Asp257. Asp257 serves as a coordination point for adenosine 3',5'-bisphosphate.

The protein belongs to the inositol monophosphatase superfamily. As to quaternary structure, monomer. Mg(2+) serves as cofactor.

The protein localises to the cytoplasm. It carries out the reaction adenosine 3',5'-bisphosphate + H2O = AMP + phosphate. The catalysed reaction is 1D-myo-inositol 1,4-bisphosphate + H2O = 1D-myo-inositol 4-phosphate + phosphate. Inhibited by Li(2+). Its function is as follows. Phosphatase that converts 3'-phosphoadenosine 5'-phosphate (PAP) to AMP. Is also able to hydrolyze inositol 1,4-bisphosphate but with less efficiency. This chain is 3',5'-bisphosphate nucleotidase, found in Entamoeba histolytica (strain ATCC 30459 / HM-1:IMSS / ABRM).